The primary structure comprises 180 residues: ATP-dependent protease subunit HslV (180 aa).

Residue T8 is part of the active site. Na(+)-binding residues include G165, C168, and T171.

Belongs to the peptidase T1B family. HslV subfamily. A double ring-shaped homohexamer of HslV is capped on each side by a ring-shaped HslU homohexamer. The assembly of the HslU/HslV complex is dependent on binding of ATP.

The protein resides in the cytoplasm. It catalyses the reaction ATP-dependent cleavage of peptide bonds with broad specificity.. Allosterically activated by HslU binding. Functionally, protease subunit of a proteasome-like degradation complex believed to be a general protein degrading machinery. This is ATP-dependent protease subunit HslV from Halalkalibacterium halodurans (strain ATCC BAA-125 / DSM 18197 / FERM 7344 / JCM 9153 / C-125) (Bacillus halodurans).